The primary structure comprises 637 residues: Transcription termination factor FttA (637 aa).

The interval Glu-4–Leu-71 is KHa. Residues Ala-72–Pro-139 are KHb. Positions Trp-180 to Ala-383 are metallo-beta-lactamase N-terminus. 6 residues coordinate Zn(2+): His-242, His-244, Asp-246, His-247, His-329, and Asp-352. A beta-Casp region spans residues Asn-384–Ser-578. The tract at residues Gly-579–Leu-637 is metallo-beta-lactamase C-terminus. Zn(2+) is bound at residue His-604.

It belongs to the metallo-beta-lactamase superfamily. RNA-metabolizing metallo-beta-lactamase-like family. FttA subfamily. In terms of assembly, homodimer. Interacts with RNA polymerase (RNAP), interacts with the Spt4-Spt5 complex. It depends on Zn(2+) as a cofactor.

In terms of biological role, terminates transcription on the whole genome. Termination is linked to FttA-mediated RNA cleavage and does not require NTP hydrolysis. Cleaves endonucleolytically at the RNA exit channel of RNA polymerase (RNAP); the 5'-3' exonuclease activity of this protein degrades the nascent RNA released from RNAP. In Methanosarcina mazei (strain ATCC BAA-159 / DSM 3647 / Goe1 / Go1 / JCM 11833 / OCM 88) (Methanosarcina frisia), this protein is Transcription termination factor FttA.